Here is a 188-residue protein sequence, read N- to C-terminus: MGRTRENKATVIADLKELLSEAQLGMVIDYQGLSVAEITELRNRLRPSGAICKVTKNTLMEQAITGDEAWEPMTNFLKGSSAFVLVKDDVGSAVRAYQSFKKDTKKTEFRGGVMQGQALNEDQVKAIADLPSKEELIGQVAGAINSIATKLAVGVNEVPTSIGRGINDIPNSLGRVMAAMAAKEEGNG.

It belongs to the universal ribosomal protein uL10 family. As to quaternary structure, part of the ribosomal stalk of the 50S ribosomal subunit. The N-terminus interacts with L11 and the large rRNA to form the base of the stalk. The C-terminus forms an elongated spine to which L12 dimers bind in a sequential fashion forming a multimeric L10(L12)X complex.

Its function is as follows. Forms part of the ribosomal stalk, playing a central role in the interaction of the ribosome with GTP-bound translation factors. The sequence is that of Large ribosomal subunit protein uL10 from Crocosphaera subtropica (strain ATCC 51142 / BH68) (Cyanothece sp. (strain ATCC 51142)).